A 215-amino-acid chain; its full sequence is Cytochrome b6 (215 aa).

A helical membrane pass occupies residues 32-52 (IFYCLGGITLTCFLVQVATGF). Residue Cys-35 participates in heme c binding. Heme b is bound by residues His-86 and His-100. 3 consecutive transmembrane segments (helical) span residues 90–110 (ASMM…TGGF), 116–136 (LTWV…VTGY), and 186–206 (LHTF…FLMI). Positions 187 and 202 each coordinate heme b.

The protein belongs to the cytochrome b family. PetB subfamily. As to quaternary structure, the 4 large subunits of the cytochrome b6-f complex are cytochrome b6, subunit IV (17 kDa polypeptide, PetD), cytochrome f and the Rieske protein, while the 4 small subunits are PetG, PetL, PetM and PetN. The complex functions as a dimer. It depends on heme b as a cofactor. Requires heme c as cofactor.

Its subcellular location is the plastid. The protein resides in the chloroplast thylakoid membrane. Component of the cytochrome b6-f complex, which mediates electron transfer between photosystem II (PSII) and photosystem I (PSI), cyclic electron flow around PSI, and state transitions. The chain is Cytochrome b6 from Welwitschia mirabilis (Tree tumbo).